The following is a 344-amino-acid chain: Methionine import ATP-binding protein MetN (344 aa).

The ABC transporter domain maps to 7–245 (ISLKKISRCF…PQDDTTIAML (239 aa)). Position 42–49 (42–49 (GRSGAGKS)) interacts with ATP.

This sequence belongs to the ABC transporter superfamily. Methionine importer (TC 3.A.1.24) family. As to quaternary structure, the complex is composed of two ATP-binding proteins (MetN), two transmembrane proteins (MetI) and a solute-binding protein (MetQ).

It localises to the cell inner membrane. It carries out the reaction L-methionine(out) + ATP + H2O = L-methionine(in) + ADP + phosphate + H(+). The catalysed reaction is D-methionine(out) + ATP + H2O = D-methionine(in) + ADP + phosphate + H(+). In terms of biological role, part of the ABC transporter complex MetNIQ involved in methionine import. Responsible for energy coupling to the transport system. The polypeptide is Methionine import ATP-binding protein MetN (Bartonella henselae (strain ATCC 49882 / DSM 28221 / CCUG 30454 / Houston 1) (Rochalimaea henselae)).